Here is a 379-residue protein sequence, read N- to C-terminus: Cytochrome b (379 aa).

The next 4 helical transmembrane spans lie at 33 to 53 (FGSL…FLAM), 77 to 98 (WTIR…FIHV), 113 to 133 (WNIG…GYVL), and 178 to 198 (FFAL…IHLL). 2 residues coordinate heme b: histidine 83 and histidine 97. Heme b-binding residues include histidine 182 and histidine 196. Histidine 201 is a binding site for a ubiquinone. The next 4 membrane-spanning stretches (helical) occupy residues 226–246 (TKDF…TLFY), 288–308 (PGGV…PFLQ), 320–340 (LSQF…WIGG), and 347–367 (FISI…FIMP).

Belongs to the cytochrome b family. As to quaternary structure, the cytochrome bc1 complex contains 11 subunits: 3 respiratory subunits (MT-CYB, CYC1 and UQCRFS1), 2 core proteins (UQCRC1 and UQCRC2) and 6 low-molecular weight proteins (UQCRH/QCR6, UQCRB/QCR7, UQCRQ/QCR8, UQCR10/QCR9, UQCR11/QCR10 and a cleavage product of UQCRFS1). This cytochrome bc1 complex then forms a dimer. Requires heme b as cofactor.

Its subcellular location is the mitochondrion inner membrane. Functionally, component of the ubiquinol-cytochrome c reductase complex (complex III or cytochrome b-c1 complex) that is part of the mitochondrial respiratory chain. The b-c1 complex mediates electron transfer from ubiquinol to cytochrome c. Contributes to the generation of a proton gradient across the mitochondrial membrane that is then used for ATP synthesis. This chain is Cytochrome b (MT-CYB), found in Lepilemur ruficaudatus (Red-tailed sportive lemur).